The following is a 263-amino-acid chain: 3-methyl-2-oxobutanoate hydroxymethyltransferase (263 aa).

Residues D45 and D84 each coordinate Mg(2+). 3-methyl-2-oxobutanoate is bound by residues 45–46, D84, and K112; that span reads DS. Residue E114 participates in Mg(2+) binding. E180 serves as the catalytic Proton acceptor.

It belongs to the PanB family. In terms of assembly, homodecamer; pentamer of dimers. Requires Mg(2+) as cofactor.

Its subcellular location is the cytoplasm. It carries out the reaction 3-methyl-2-oxobutanoate + (6R)-5,10-methylene-5,6,7,8-tetrahydrofolate + H2O = 2-dehydropantoate + (6S)-5,6,7,8-tetrahydrofolate. The protein operates within cofactor biosynthesis; (R)-pantothenate biosynthesis; (R)-pantoate from 3-methyl-2-oxobutanoate: step 1/2. Catalyzes the reversible reaction in which hydroxymethyl group from 5,10-methylenetetrahydrofolate is transferred onto alpha-ketoisovalerate to form ketopantoate. The protein is 3-methyl-2-oxobutanoate hydroxymethyltransferase of Klebsiella pneumoniae subsp. pneumoniae (strain ATCC 700721 / MGH 78578).